The following is a 1377-amino-acid chain: DNA-directed RNA polymerase subunit beta (1377 aa).

It belongs to the RNA polymerase beta chain family. As to quaternary structure, the RNAP catalytic core consists of 2 alpha, 1 beta, 1 beta' and 1 omega subunit. When a sigma factor is associated with the core the holoenzyme is formed, which can initiate transcription.

The enzyme catalyses RNA(n) + a ribonucleoside 5'-triphosphate = RNA(n+1) + diphosphate. DNA-dependent RNA polymerase catalyzes the transcription of DNA into RNA using the four ribonucleoside triphosphates as substrates. This chain is DNA-directed RNA polymerase subunit beta, found in Brucella suis biovar 1 (strain 1330).